A 357-amino-acid polypeptide reads, in one-letter code: 3'(2'),5'-bisphosphate nucleotidase (357 aa).

Residue D49 is the Proton acceptor of the active site. Mg(2+)-binding residues include E72, D142, I144, and D145. Catalysis depends on T147, which acts as the Proton acceptor. 6 residues coordinate adenosine 3',5'-bisphosphate: T147, H241, S264, K267, R281, and D294. Positions 241, 264, 267, 281, and 294 each coordinate AMP. D294 serves as a coordination point for Mg(2+).

It belongs to the inositol monophosphatase superfamily. The cofactor is Mg(2+).

The protein localises to the cytoplasm. Its subcellular location is the nucleus. The enzyme catalyses 3'-phosphoadenylyl sulfate + H2O = adenosine 5'-phosphosulfate + phosphate. It carries out the reaction adenosine 3',5'-bisphosphate + H2O = AMP + phosphate. The catalysed reaction is adenosine 2',5'-bisphosphate + H2O = AMP + phosphate. Phosphatase activity is very sensitive to lithium and moderately sensitive to sodium. The inhibitory effects of lithium and sodium are overcome by high concentrations of potassium. Lithium exerts its inhibitory action by blocking the products of the PAP hydrolysis at the active site. Its function is as follows. Phosphatase that converts adenosine 3'-phosphate 5'-phosphosulfate (PAPS) to adenosine 5'-phosphosulfate (APS) and 3'(2')-phosphoadenosine 5'-phosphate (PAP) to AMP. May regulate the flux of sulfur in the sulfur-activation pathway by converting PAPS to APS. Involved in salt tolerance. Confers resistance to lithium. Shows no activity on inositol mono- and diphosphates, 3'-AMP, AMP, nicotinamide adenine dinucleotide phosphate (NADP), and p-nitrophenylphosphate. This is 3'(2'),5'-bisphosphate nucleotidase (MET22) from Saccharomyces cerevisiae (strain ATCC 204508 / S288c) (Baker's yeast).